Reading from the N-terminus, the 181-residue chain is Oligoribonuclease (181 aa).

Positions 8 to 171 (LIWIDLEMTG…DDIRESIAEL (164 aa)) constitute an Exonuclease domain. Tyrosine 129 is an active-site residue.

Belongs to the oligoribonuclease family.

Its subcellular location is the cytoplasm. In terms of biological role, 3'-to-5' exoribonuclease specific for small oligoribonucleotides. In Vibrio cholerae serotype O1 (strain ATCC 39541 / Classical Ogawa 395 / O395), this protein is Oligoribonuclease.